We begin with the raw amino-acid sequence, 639 residues long: Extracellular metalloproteinase 1 (639 aa).

A signal peptide spans 1–19 (MHGLLLAAGLISLPLHVLA). The propeptide occupies 20-250 (HPQPSSTSLA…VHNVVDYVAH (231 aa)). N-linked (GlcNAc...) asparagine glycosylation is present at Asn-291. His-434 serves as a coordination point for Zn(2+). Residue Glu-435 is part of the active site. His-438 provides a ligand contact to Zn(2+). Asn-598 carries N-linked (GlcNAc...) asparagine glycosylation.

It belongs to the peptidase M36 family. The cofactor is Zn(2+).

The protein resides in the secreted. Secreted metalloproteinase probably acting as a virulence factor. In Arthroderma otae (strain ATCC MYA-4605 / CBS 113480) (Microsporum canis), this protein is Extracellular metalloproteinase 1 (MEP1).